A 186-amino-acid chain; its full sequence is Large ribosomal subunit protein uL5c (186 aa).

The protein belongs to the universal ribosomal protein uL5 family. Part of the 50S ribosomal subunit; contacts the 5S rRNA.

It is found in the plastid. Its subcellular location is the chloroplast. Binds 5S rRNA, forms part of the central protuberance of the 50S subunit. The polypeptide is Large ribosomal subunit protein uL5c (rpl5) (Chaetosphaeridium globosum (Charophycean green alga)).